The chain runs to 937 residues: Scaffold attachment factor B1 (937 aa).

The segment at 1–35 is disordered; it reads MAETLSGLGDASAAGAAAVSSAASETGTRRLSDLR. At A2 the chain carries N-acetylalanine. Low complexity predominate over residues 11 to 24; that stretch reads ASAAGAAAVSSAAS. 2 positions are modified to phosphoserine: S24 and S55. The 35-residue stretch at 31 to 65 folds into the SAP domain; sequence LSDLRVIDLRAELKKRNLDSSGNKSVLMERLKKAI. The disordered stretch occupies residues 64-117; it reads AIEDEGGNPDEIEVTSECNKKMPKRPSKGRKPEDEGVEDNGLEENSGDGQEDVE. A compositionally biased stretch (acidic residues) spans 67–77; that stretch reads DEGGNPDEIEV. The residue at position 79 (S79) is a Phosphoserine. The segment covering 98–117 has biased composition (acidic residues); that stretch reads EGVEDNGLEENSGDGQEDVE. Glycyl lysine isopeptide (Lys-Gly) (interchain with G-Cter in SUMO2) cross-links involve residues K172 and K186. T188 is modified (phosphothreonine). Residues S195, S197, and S209 each carry the phosphoserine modification. The tract at residues 222 to 429 is disordered; sequence GETCKSEPVK…EKGRSSCGRN (208 aa). Residues 225-234 are compositionally biased toward basic and acidic residues; it reads CKSEPVKEEG. Residue K231 forms a Glycyl lysine isopeptide (Lys-Gly) (interchain with G-Cter in SUMO) linkage. A compositionally biased stretch (acidic residues) spans 268-287; it reads EEEEEEEEEDQEEEQEEEGD. A Glycyl lysine isopeptide (Lys-Gly) (interchain with G-Cter in SUMO) cross-link involves residue K316. Polar residues predominate over residues 341–356; sequence EQSSTAAQLPEATSQE. The span at 370–380 shows a compositional bias: basic and acidic residues; sequence QDSKEDVKKFA. A Glycyl lysine isopeptide (Lys-Gly) (interchain with G-Cter in SUMO2) cross-link involves residue K403. Phosphoserine is present on residues S405 and S406. A compositionally biased stretch (basic and acidic residues) spans 412–423; the sequence is DTKRLSREEKGR. Residue K414 forms a Glycyl lysine isopeptide (Lys-Gly) (interchain with G-Cter in SUMO2) linkage. One can recognise an RRM domain in the interval 428 to 506; sequence RNFWVSGLSS…KMISVEKAKS (79 aa). S437 is modified (phosphoserine). Composition is skewed to basic and acidic residues over residues 499-573 and 581-592; these read ISVE…ERSR and GTERTVVMDKSK. 3 disordered regions span residues 499–661, 684–738, and 771–937; these read ISVE…WERE, RMER…YEVD, and FDHR…TRRY. Residues K505, K536, K565, and K592 each participate in a glycyl lysine isopeptide (Lys-Gly) (interchain with G-Cter in SUMO2) cross-link. The interaction with POLR2A; SFRS1; SFRS9 and SFRS10 stretch occupies residues 550–814; it reads TDDGSTEKSK…RHGGPERHGR (265 aa). A Glycyl lysine isopeptide (Lys-Gly) (interchain with G-Cter in SUMO1); alternate cross-link involves residue K600. K600 is covalently cross-linked (Glycyl lysine isopeptide (Lys-Gly) (interchain with G-Cter in SUMO2); alternate). Phosphoserine is present on residues S602, S604, S623, and S626. A compositionally biased stretch (basic and acidic residues) spans 603 to 661; the sequence is GSKERASKSQDRKSASREKRSVVSFDKVKESRKSRDSESRRERERSEREQRLQAQWERE. Positions 621–638 match the Nuclear localization signal motif; the sequence is KRSVVSFDKVKESRKSRD. The segment at 621–937 is interaction with SAFB2; sequence KRSVVSFDKV…PSDARFTRRY (317 aa). K629 carries the post-translational modification N6-acetyllysine. Residues 652 to 726 are a coiled coil; it reads QRLQAQWERE…RQQELRYEQE (75 aa). Basic and acidic residues predominate over residues 771–818; the sequence is FDHRDRGRYPNHSVDRREGSRSMMGDREGQHYPERHGGPERHGRDSRD. At R832 the chain carries Omega-N-methylarginine. Composition is skewed to basic and acidic residues over residues 838-854 and 863-873; these read PRRDWGEHGRRLEDDRA and MMERDHKRWQG. Residue K869 forms a Glycyl lysine isopeptide (Lys-Gly) (interchain with G-Cter in SUMO2) linkage. 4 positions are modified to asymmetric dimethylarginine: R890, R896, R906, and R912. Basic and acidic residues predominate over residues 927–937; it reads RPSDARFTRRY.

Monomer and homodimer. Forms heterodimers with SAFB2. Interacts with KHDRBS3. Interacts with CLK2. Interacts with POLR2A, ASF/SRSF1, SRp30c/SRFS9 and TRA2B/SFRS10. Interacts with SRPK1 and inhibits its activity. Interacts with RBMX. Interacts with FUS. Interacts with ZBED4. Post-translationally, sumoylated by PIAS1 with SUMO1 and SUMO2/3, desumoylated by SENP1. Sumoylation is required for transcriptional repressor activity.

The protein localises to the nucleus. In terms of biological role, binds to scaffold/matrix attachment region (S/MAR) DNA and forms a molecular assembly point to allow the formation of a 'transcriptosomal' complex (consisting of SR proteins and RNA polymerase II) coupling transcription and RNA processing. Functions as an estrogen receptor corepressor and can also bind to the HSP27 promoter and decrease its transcription. Thereby acts as a negative regulator of cell proliferation. When associated with RBMX, binds to and stimulates transcription from the SREBF1 promoter. This is Scaffold attachment factor B1 (Safb) from Mus musculus (Mouse).